The primary structure comprises 2798 residues: Kinesin-like protein KIN-12F (2798 aa).

The tract at residues 1-165 (MVRDLAAVRR…RPPMSSGQRG (165 aa)) is disordered. Composition is skewed to low complexity over residues 8–22 (VRRT…SSAS) and 31–58 (PVDA…QPPQ). Residues 210-547 (NVQVVIRVRP…LKFAQRARLI (338 aa)) form the Kinesin motor domain. Position 291 to 298 (291 to 298 (GQTGSGKT)) interacts with ATP. Positions 600–615 (DVDDGTESMNMDEEND) are enriched in acidic residues. The interval 600-621 (DVDDGTESMNMDEENDNDAHDR) is disordered. Coiled-coil stretches lie at residues 792 to 835 (ELKR…HSSN), 890 to 987 (LAEE…HRRQ), 1014 to 1108 (LKRM…VMKE), 1281 to 1322 (QRAM…LKNE), and 2130 to 2333 (ELVD…VRQQ). Residues 2338 to 2359 (PSSGQATSSLEGGMGDFTDSSR) are disordered. Coiled-coil stretches lie at residues 2361 to 2427 (SREI…VKSD) and 2545 to 2758 (ESKE…LKLK). The tract at residues 2772-2798 (RSESSSLSSGRSRSPSVCRSPSISSFR) is disordered. The segment covering 2774-2798 (ESSSLSSGRSRSPSVCRSPSISSFR) has biased composition (low complexity).

Belongs to the TRAFAC class myosin-kinesin ATPase superfamily. Kinesin family. KIN-12 subfamily.

This chain is Kinesin-like protein KIN-12F, found in Oryza sativa subsp. japonica (Rice).